We begin with the raw amino-acid sequence, 261 residues long: MLITISPAKTLDFESPLATTQFTQPELLKYSQQLITECRKLSSSDIASLMKISDKLAGLNAARFGEWQPDFTPDNARQAILAFKGDVYTGMQAAELFTDDDFQFAQQHLRILSGLYGVLRPLDLMQPYRLEMGIKLNNKKGSDLYQFWGNIITETLNNALEAQGDNILVNLASDEYFKSVNPKKLNAEIIKPVFLDEKNGKYKVISFYAKKARGLMSRFIIQERLSDKAQLKEFNLEGYQFNAAESEGNTLVFKRAEHLAK.

It belongs to the UPF0246 family.

The chain is UPF0246 protein PMI0005 from Proteus mirabilis (strain HI4320).